The primary structure comprises 1014 residues: Collagen alpha-1(I) chain (1014 aa).

The disordered stretch occupies residues 1–1014; the sequence is SYGYDEKGGI…PGPPGPPGPP (1014 aa). The span at 9–22 shows a compositional bias: low complexity; it reads GISVPGPMGPSGPR. A 4-hydroxyproline mark is found at Pro-25, Pro-28, Pro-30, Pro-39, Pro-42, Pro-45, Pro-60, Pro-75, Pro-81, Pro-90, and Pro-96. Positions 33-51 are enriched in low complexity; it reads QGFQGPPGEPGEPGSSGPM. Over residues 63 to 77 the composition is skewed to basic and acidic residues; sequence NGDDGEAGKPGRPGE. A 5-hydroxylysine; alternate modification is found at Lys-99. Lys-99 carries O-linked (Gal...) hydroxylysine; alternate glycosylation. Ser-105 carries the phosphoserine modification. Residues 113–129 are compositionally biased toward low complexity; that stretch reads DAGPAGPKGEPGSPGEN. 4-hydroxyproline is present on residues Pro-123, Pro-126, Pro-132, Pro-141, Pro-147, Pro-168, Pro-177, Pro-180, Pro-207, Pro-210, Pro-222, Pro-228, Pro-237, Pro-243, Pro-246, and Pro-261. The span at 147–165 shows a compositional bias: low complexity; sequence PGASGPAGARGNDGATGAA. The segment covering 167–179 has biased composition (pro residues); it reads PPGPTGPAGPPGF. Over residues 213 to 252 the composition is skewed to low complexity; it reads AGAAGPAGNPGADGQPGAKGANGAPGIAGAPGFPGARGPS. A 5-hydroxylysine modification is found at Lys-264. Pro-270, Pro-273, Pro-285, Pro-294, Pro-309, Pro-315, Pro-324, and Pro-330 each carry 4-hydroxyproline. Residues 319–328 are compositionally biased toward gly residues; it reads GERGGPGSRG. Lys-339 is modified (5-hydroxylysine). Pro-348, Pro-357, Pro-363, Pro-369, Pro-378, Pro-381, Pro-390, Pro-399, Pro-405, Pro-417, Pro-426, Pro-435, Pro-438, Pro-456, Pro-473, Pro-479, Pro-485, Pro-491, Pro-497, Pro-503, Pro-515, Pro-524, Pro-535, Pro-548, Pro-554, and Pro-563 each carry 4-hydroxyproline. Residues 372–398 are compositionally biased toward low complexity; sequence KGLTGSPGSPGPDGKTGPPGPAGQDGR. Over residues 407-426 the composition is skewed to low complexity; that stretch reads ARGQAGVMGFPGPKGAAGEP. Residues 485-494 are compositionally biased toward low complexity; sequence PGEAGKPGEQ. Lys-575 is subject to 5-hydroxylysine. A 4-hydroxyproline mark is found at Pro-581, Pro-596, and Pro-602. A compositionally biased stretch (low complexity) spans 608 to 622; the sequence is SGPSGPAGPTGARGA. Position 611 is a phosphoserine (Ser-611). A 4-hydroxyproline mark is found at Pro-623, Pro-629, Pro-632, Pro-641, Pro-647, Pro-674, and Pro-683. Positions 635–665 are enriched in low complexity; sequence AGFAGPPGADGQPGAKGEPGDAGAKGDAGPS. Position 686 is a 5-hydroxylysine (Lys-686). A compositionally biased stretch (low complexity) spans 691–707; it reads SAGPPGATGFPGAAGRV. 4-hydroxyproline occurs at positions 695 and 701. Pro-709 is modified (3-hydroxyproline). 4-hydroxyproline is present on residues Pro-710, Pro-719, Pro-722, Pro-743, Pro-752, Pro-760, Pro-769, Pro-787, Pro-796, Pro-799, Pro-805, Pro-820, Pro-826, Pro-832, Pro-841, and Pro-847. Low complexity predominate over residues 736–745; it reads ETGPAGRPGE. Residues 757 to 769 show a composition bias toward low complexity; sequence KGSPGADGPAGAP. The span at 819-829 shows a compositional bias: pro residues; it reads PPGPVGPPGLA. 5-hydroxylysine is present on Lys-856. Positions 864–879 are enriched in pro residues; sequence PGPPGAPGAPGAPGPV. A 4-hydroxyproline mark is found at Pro-867, Pro-870, and Pro-873. The segment covering 900-914 has biased composition (low complexity); sequence AGPAGARGPAGPQGP. Over residues 915-929 the composition is skewed to basic and acidic residues; it reads RGDKGETGEQGDRGI. Lys-918 carries the 5-hydroxylysine modification. 5-hydroxylysine; alternate is present on Lys-930. An O-linked (Gal...) hydroxylysine; alternate glycan is attached at Lys-930. Pro-945, Pro-948, Pro-966, and Pro-981 each carry 4-hydroxyproline. Over residues 948 to 981 the composition is skewed to low complexity; that stretch reads PGEQGPSGASGPAGPRGPPGSAGSPGKDGLNGLP. Position 986 is a 3-hydroxyproline (Pro-986). A 4-hydroxyproline modification is found at Pro-987. Over residues 999 to 1014 the composition is skewed to pro residues; sequence VGPPGPPGPPGPPGPP. At Pro-1001 the chain carries 3-hydroxyproline. At Pro-1002 the chain carries 4-hydroxyproline. At Pro-1004 the chain carries 3-hydroxyproline. Pro-1005 is subject to 4-hydroxyproline. Pro-1007 carries the post-translational modification 3-hydroxyproline. 4-hydroxyproline occurs at positions 1008, 1011, and 1014.

It belongs to the fibrillar collagen family. As to quaternary structure, trimers of one alpha 2(I) and two alpha 1(I) chains. Post-translationally, contains mostly 4-hydroxyproline. Proline residues at the third position of the tripeptide repeating unit (G-X-Y) are hydroxylated in some or all of the chains. Contains 3-hydroxyproline at a few sites. This modification occurs on the first proline residue in the sequence motif Gly-Pro-Hyp, where Hyp is 4-hydroxyproline. In terms of processing, lysine residues at the third position of the tripeptide repeating unit (G-X-Y) are 5-hydroxylated in some or all of the chains. Post-translationally, O-glycosylated on hydroxylated lysine residues. The O-linked glycan consists of a Glc-Gal disaccharide. Expressed in bones.

It localises to the secreted. It is found in the extracellular space. The protein resides in the extracellular matrix. In terms of biological role, type I collagen is a member of group I collagen (fibrillar forming collagen). This chain is Collagen alpha-1(I) chain, found in Megatherium americanum (Giant ground sloth).